A 300-amino-acid polypeptide reads, in one-letter code: Porphobilinogen deaminase (300 aa).

Cys-239 carries the S-(dipyrrolylmethanemethyl)cysteine modification.

This sequence belongs to the HMBS family. In terms of assembly, monomer. Requires dipyrromethane as cofactor.

It carries out the reaction 4 porphobilinogen + H2O = hydroxymethylbilane + 4 NH4(+). Its pathway is porphyrin-containing compound metabolism; protoporphyrin-IX biosynthesis; coproporphyrinogen-III from 5-aminolevulinate: step 2/4. In terms of biological role, tetrapolymerization of the monopyrrole PBG into the hydroxymethylbilane pre-uroporphyrinogen in several discrete steps. The polypeptide is Porphobilinogen deaminase (Francisella tularensis subsp. holarctica (strain FTNF002-00 / FTA)).